The primary structure comprises 110 residues: MNITPIHDNVLVSLVESNKEEVSKKGIITSLASNDKSDANANKGIVIALGAGPAYGKTEKPKYAFGVGDIIYFKEYSGISFENEGNKYKIIGFEDVLAFEKPESGKQRKR.

The protein belongs to the GroES chaperonin family. In terms of assembly, heptamer of 7 subunits arranged in a ring. Interacts with the chaperonin GroEL.

The protein localises to the cytoplasm. In terms of biological role, together with the chaperonin GroEL, plays an essential role in assisting protein folding. The GroEL-GroES system forms a nano-cage that allows encapsulation of the non-native substrate proteins and provides a physical environment optimized to promote and accelerate protein folding. GroES binds to the apical surface of the GroEL ring, thereby capping the opening of the GroEL channel. The protein is Co-chaperonin GroES of Mycoplasma genitalium (strain ATCC 33530 / DSM 19775 / NCTC 10195 / G37) (Mycoplasmoides genitalium).